The following is a 140-amino-acid chain: Midkine (140 aa).

The N-terminal stretch at 1–20 is a signal peptide; that stretch reads MQHRSFFLLALVALLAVTTA. 5 cysteine pairs are disulfide-bonded: C34–C58, C42–C67, C49–C71, C81–C113, and C91–C123.

This sequence belongs to the pleiotrophin family. Homodimer. Interacts with ALK. Interacts with LRP1; promotes neuronal survival. Interacts with LRP2. Interacts with NCAM1. Interacts (via C-terminal) with PTPRZ1 (via chondroitin sulfate chains); this interaction is inhibited by PTN; this interaction promotes neuronal migration. Interacts with NCL; this interaction promotes NCL clustering and lateral movements of this complex into lipid rafts leading to MDK internalization. Interacts with LRP6 and LRP8: this interaction is calcium dependent. Interacts with ITGA4. Interacts with ITGA6. Interacts with ITGB1. Interacts with ITGA4:ITGB1 complex; this interaction mediates MDK-induced osteoblast cells migration through PXN phosphorylation. Interacts with ITGA6:ITGB1 complex; this interaction mediates MDK-induced neurite outgrowth. Interacts with NOTCH2; this interactio mediates a nuclear accumulation of NOTCH2 and therefore activation of NOTCH2 signaling leading to interaction between HES1 and STAT3. Interacts with GPC2 (via heparan sulfate chain); this interaction is inhibited by heparin followed by chondroitin sulfate E; this interaction induces GPC2 clustering through heparan sulfate chain; this interaction induces neuronal cell adhesion and neurite outgrowth. Interacts with SDC3; this interaction induces SDC3 clustering; this interaction induces neuronal cell adhesion and neurite outgrowth. Interacts with SDC1. Interacts with CSPG5; this interaction promotes elongation of oligodendroglial precursor-like cells. In terms of tissue distribution, expressed at a low level in arteries, and at higher levels in newly formed neointima. In brain, expressed in the caudate nucleus and the brain stem.

The protein localises to the secreted. Functionally, developmentally regulated, secreted growth factor homologous to pleiotrophin (PTN), which has heparin binding activity. Binds anaplastic lymphoma kinase (ALK) which induces ALK activation and subsequent phosphorylation of the insulin receptor substrate (IRS1), followed by the activation of mitogen-activated protein kinase (MAPK) and PI3-kinase, and the induction of cell proliferation. Involved in neointima formation after arterial injury, possibly by mediating leukocyte recruitment. Also involved in early fetal adrenal gland development. Its function is as follows. Secreted protein that functions as a cytokine and growth factor and mediates its signal through cell-surface proteoglycan and non-proteoglycan receptors. Binds cell-surface proteoglycan receptors via their chondroitin sulfate (CS) groups. Thereby regulates many processes like inflammatory response, cell proliferation, cell adhesion, cell growth, cell survival, tissue regeneration, cell differentiation and cell migration. Participates in inflammatory processes by exerting two different activities. Firstly, mediates neutrophils and macrophages recruitment to the sites of inflammation both by direct action by cooperating namely with ITGB2 via LRP1 and by inducing chemokine expression. This inflammation can be accompanied by epithelial cell survival and smooth muscle cell migration after renal and vessel damage, respectively. Secondly, suppresses the development of tolerogenic dendric cells thereby inhibiting the differentiation of regulatory T cells and also promote T cell expansion through NFAT signaling and Th1 cell differentiation. Promotes tissue regeneration after injury or trauma. After heart damage negatively regulates the recruitment of inflammatory cells and mediates cell survival through activation of anti-apoptotic signaling pathways via MAPKs and AKT pathways through the activation of angiogenesis. Also facilitates liver regeneration as well as bone repair by recruiting macrophage at trauma site and by promoting cartilage development by facilitating chondrocyte differentiation. Plays a role in brain by promoting neural precursor cells survival and growth through interaction with heparan sulfate proteoglycans. Binds PTPRZ1 and promotes neuronal migration and embryonic neurons survival. Binds SDC3 or GPC2 and mediates neurite outgrowth and cell adhesion. Binds chondroitin sulfate E and heparin leading to inhibition of neuronal cell adhesion induced by binding with GPC2. Binds CSPG5 and promotes elongation of oligodendroglial precursor-like cells. Also binds ITGA6:ITGB1 complex; this interaction mediates MDK-induced neurite outgrowth. Binds LRP1; promotes neuronal survival. Binds ITGA4:ITGB1 complex; this interaction mediates MDK-induced osteoblast cells migration through PXN phosphorylation. Binds anaplastic lymphoma kinase (ALK) which induces ALK activation and subsequent phosphorylation of the insulin receptor substrate (IRS1), followed by the activation of mitogen-activated protein kinase (MAPK) and PI3-kinase, and the induction of cell proliferation. Promotes epithelial to mesenchymal transition through interaction with NOTCH2. During arteriogenesis, plays a role in vascular endothelial cell proliferation by inducing VEGFA expression and release which in turn induces nitric oxide synthase expression. Moreover activates vasodilation through nitric oxide synthase activation. Negatively regulates bone formation in response to mechanical load by inhibiting Wnt/beta-catenin signaling in osteoblasts. In addition plays a role in hippocampal development, working memory, auditory response, early fetal adrenal gland development and the female reproductive system. The chain is Midkine from Rattus norvegicus (Rat).